Consider the following 419-residue polypeptide: MHNIKKIRNDVEAFKKALNKRFIEIDVDKILSLDENNRDYIQQRELLEKEKKDISKSKDQSLFEKSKKITVEIDNISKLQAGVKNELETILSSIPNIPHPDVPTGKDENSNVEISKSGTIPNFKFKPKSHYELGENLNMLDFDLATKTTGSRFVFVKDKLAMLERALSNFMLDTHVNTNGYEEISPPLIATDATMYGTGQLPKFDNDQFELKLDDSSDRKFLIPTAEVILTNIVKDQIIDKKKLPMRMVASTPCFRKEAGSYGKDTKGMIRQHQFYKVEMVSIVEIDKCLPELDRMTDCATKILDLLKLPYRKIVLCTGDMGFSAEKTFDIEVWLPSEDKYREISSCSSCGSFQARRMKARYKNEKKETVLVGTLNGSGLAVGRTLVAILENYQQEDGSILVPEALKPYMNNIEKIVKI.

L-serine is bound at residue 225 to 227 (TAE). 256–258 (RKE) contributes to the ATP binding site. Glu279 is a binding site for L-serine. ATP is bound at residue 343–346 (EISS). Ser378 is an L-serine binding site.

It belongs to the class-II aminoacyl-tRNA synthetase family. Type-1 seryl-tRNA synthetase subfamily. As to quaternary structure, homodimer. The tRNA molecule binds across the dimer.

The protein resides in the cytoplasm. It carries out the reaction tRNA(Ser) + L-serine + ATP = L-seryl-tRNA(Ser) + AMP + diphosphate + H(+). It catalyses the reaction tRNA(Sec) + L-serine + ATP = L-seryl-tRNA(Sec) + AMP + diphosphate + H(+). It functions in the pathway aminoacyl-tRNA biosynthesis; selenocysteinyl-tRNA(Sec) biosynthesis; L-seryl-tRNA(Sec) from L-serine and tRNA(Sec): step 1/1. In terms of biological role, catalyzes the attachment of serine to tRNA(Ser). Is also able to aminoacylate tRNA(Sec) with serine, to form the misacylated tRNA L-seryl-tRNA(Sec), which will be further converted into selenocysteinyl-tRNA(Sec). This chain is Serine--tRNA ligase, found in Pelagibacter ubique (strain HTCC1062).